Here is a 490-residue protein sequence, read N- to C-terminus: 2-succinylbenzoate--CoA ligase (490 aa).

The protein belongs to the ATP-dependent AMP-binding enzyme family. MenE subfamily.

The catalysed reaction is 2-succinylbenzoate + ATP + CoA = 2-succinylbenzoyl-CoA + AMP + diphosphate. Its pathway is quinol/quinone metabolism; 1,4-dihydroxy-2-naphthoate biosynthesis; 1,4-dihydroxy-2-naphthoate from chorismate: step 5/7. It participates in quinol/quinone metabolism; menaquinone biosynthesis. Functionally, converts 2-succinylbenzoate (OSB) to 2-succinylbenzoyl-CoA (OSB-CoA). This is 2-succinylbenzoate--CoA ligase from Geobacillus kaustophilus (strain HTA426).